A 277-amino-acid polypeptide reads, in one-letter code: 3-methyl-2-oxobutanoate hydroxymethyltransferase (277 aa).

Mg(2+)-binding residues include aspartate 43 and aspartate 82. 3-methyl-2-oxobutanoate-binding positions include 43 to 44, aspartate 82, and lysine 112; that span reads DS. Residue glutamate 114 participates in Mg(2+) binding. Glutamate 181 serves as the catalytic Proton acceptor.

It belongs to the PanB family. Homodecamer; pentamer of dimers. Mg(2+) is required as a cofactor.

It is found in the cytoplasm. The enzyme catalyses 3-methyl-2-oxobutanoate + (6R)-5,10-methylene-5,6,7,8-tetrahydrofolate + H2O = 2-dehydropantoate + (6S)-5,6,7,8-tetrahydrofolate. It participates in cofactor biosynthesis; (R)-pantothenate biosynthesis; (R)-pantoate from 3-methyl-2-oxobutanoate: step 1/2. Functionally, catalyzes the reversible reaction in which hydroxymethyl group from 5,10-methylenetetrahydrofolate is transferred onto alpha-ketoisovalerate to form ketopantoate. The sequence is that of 3-methyl-2-oxobutanoate hydroxymethyltransferase from Listeria monocytogenes serotype 4a (strain HCC23).